Consider the following 245-residue polypeptide: MLIIPAIDLKDGACVRLRQGRMEDSTVFSDDPVSMAAKWVEGGCRRLHLVDLNGAFEGQPVNGEVVTAIAKRYPNLPIQIGGGIRTLETIEHYVRAGVSYVIIGTKAVKEPEFVTEACKAFPGKVIVGLDAKDGFVATDGWAEVSSVQATDLAKRFEADGVSAIVYTDIAKDGMMQGCNVEATAALAAASKIPVIASGGIHNLGDIEKLLLARSPGIIGAITGRAIYEGTLDVAEAQAFCDSFKG.

Asp-8 functions as the Proton acceptor in the catalytic mechanism. The active-site Proton donor is the Asp-130.

Belongs to the HisA/HisF family.

The protein resides in the cytoplasm. The enzyme catalyses 1-(5-phospho-beta-D-ribosyl)-5-[(5-phospho-beta-D-ribosylamino)methylideneamino]imidazole-4-carboxamide = 5-[(5-phospho-1-deoxy-D-ribulos-1-ylimino)methylamino]-1-(5-phospho-beta-D-ribosyl)imidazole-4-carboxamide. The protein operates within amino-acid biosynthesis; L-histidine biosynthesis; L-histidine from 5-phospho-alpha-D-ribose 1-diphosphate: step 4/9. This chain is 1-(5-phosphoribosyl)-5-[(5-phosphoribosylamino)methylideneamino] imidazole-4-carboxamide isomerase, found in Ectopseudomonas mendocina (strain ymp) (Pseudomonas mendocina).